Consider the following 415-residue polypeptide: Methylthioribose-1-phosphate isomerase (415 aa).

Aspartate 284 acts as the Proton donor in catalysis.

Belongs to the eIF-2B alpha/beta/delta subunits family. MtnA subfamily.

It is found in the cytoplasm. The protein resides in the nucleus. The catalysed reaction is 5-(methylsulfanyl)-alpha-D-ribose 1-phosphate = 5-(methylsulfanyl)-D-ribulose 1-phosphate. The protein operates within amino-acid biosynthesis; L-methionine biosynthesis via salvage pathway; L-methionine from S-methyl-5-thio-alpha-D-ribose 1-phosphate: step 1/6. In terms of biological role, catalyzes the interconversion of methylthioribose-1-phosphate (MTR-1-P) into methylthioribulose-1-phosphate (MTRu-1-P). The sequence is that of Methylthioribose-1-phosphate isomerase from Candida glabrata (strain ATCC 2001 / BCRC 20586 / JCM 3761 / NBRC 0622 / NRRL Y-65 / CBS 138) (Yeast).